Consider the following 238-residue polypeptide: NAD-dependent protein deacylase (238 aa).

The Deacetylase sirtuin-type domain maps to 1–237; it reads MRGIMKVFVL…PAWVERLLAR (237 aa). 12–31 provides a ligand contact to NAD(+); that stretch reads GAGVSAESGLGTFRDKDGVW. Substrate is bound by residues Tyr56 and Arg59. 94 to 97 lines the NAD(+) pocket; sequence QNVD. His112 functions as the Proton acceptor in the catalytic mechanism. Cys120, Cys123, Cys139, and Cys142 together coordinate Zn(2+). NAD(+)-binding positions include 179–181, 205–207, and Ala223; these read GTS and NLE.

The protein belongs to the sirtuin family. Class III subfamily. The cofactor is Zn(2+).

Its subcellular location is the cytoplasm. It catalyses the reaction N(6)-acetyl-L-lysyl-[protein] + NAD(+) + H2O = 2''-O-acetyl-ADP-D-ribose + nicotinamide + L-lysyl-[protein]. The enzyme catalyses N(6)-succinyl-L-lysyl-[protein] + NAD(+) + H2O = 2''-O-succinyl-ADP-D-ribose + nicotinamide + L-lysyl-[protein]. Its function is as follows. NAD-dependent lysine deacetylase and desuccinylase that specifically removes acetyl and succinyl groups on target proteins. Modulates the activities of several proteins which are inactive in their acylated form. The polypeptide is NAD-dependent protein deacylase (Caulobacter vibrioides (strain ATCC 19089 / CIP 103742 / CB 15) (Caulobacter crescentus)).